The sequence spans 86 residues: Large ribosomal subunit protein bL31B (86 aa).

Belongs to the bacterial ribosomal protein bL31 family. Type B subfamily. In terms of assembly, part of the 50S ribosomal subunit.

This Vibrio vulnificus (strain YJ016) protein is Large ribosomal subunit protein bL31B.